The following is an 84-amino-acid chain: uncharacterized protein (84 aa).

A 2Fe-2S ferredoxin-type domain is found at 2-84 (ARVTLRITGT…RAKGDIEIEM (83 aa)). [2Fe-2S] cluster contacts are provided by C37, C42, C45, and C74.

[2Fe-2S] cluster is required as a cofactor.

This is an uncharacterized protein from Escherichia coli O6:H1 (strain CFT073 / ATCC 700928 / UPEC).